A 92-amino-acid chain; its full sequence is Small ribosomal subunit protein uS19 (92 aa).

This sequence belongs to the universal ribosomal protein uS19 family.

In terms of biological role, protein S19 forms a complex with S13 that binds strongly to the 16S ribosomal RNA. The sequence is that of Small ribosomal subunit protein uS19 from Acidovorax sp. (strain JS42).